A 54-amino-acid chain; its full sequence is Zinc-containing ferredoxin A (54 aa).

The disordered stretch occupies residues 1 to 21 (GIDPNYRTSRPEVGTHEGHKV). Positions 1–36 (GIDPNYRTSRPEVGTHEGHKVYGPVENPKVLGIHGA) are N-terminal extension. Positions 9-20 (SRPEVGTHEGHK) are enriched in basic and acidic residues. Residues His16 and His19 each contribute to the Zn(2+) site. Lys29 is subject to N6-methyllysine. His34 serves as a coordination point for Zn(2+). Residues 35–54 (GAIVGVDFDLCIADGSCINA) form the 4Fe-4S ferredoxin-type 1 domain. The [3Fe-4S] cluster site is built by Cys45 and Cys51.

Requires [3Fe-4S] cluster as cofactor. [4Fe-4S] cluster is required as a cofactor. The cofactor is Zn(2+).

Ferredoxins are iron-sulfur proteins that transfer electrons in a wide variety of metabolic reactions. The sequence is that of Zinc-containing ferredoxin A (zfx) from Sulfuracidifex metallicus (Sulfolobus metallicus).